The following is a 358-amino-acid chain: Alanine racemase (358 aa).

Residue lysine 34 is the Proton acceptor; specific for D-alanine of the active site. N6-(pyridoxal phosphate)lysine is present on lysine 34. Arginine 129 contributes to the substrate binding site. The active-site Proton acceptor; specific for L-alanine is the tyrosine 254. A substrate-binding site is contributed by methionine 302.

It belongs to the alanine racemase family. Requires pyridoxal 5'-phosphate as cofactor.

The enzyme catalyses L-alanine = D-alanine. It participates in amino-acid biosynthesis; D-alanine biosynthesis; D-alanine from L-alanine: step 1/1. In terms of biological role, catalyzes the interconversion of L-alanine and D-alanine. May also act on other amino acids. This chain is Alanine racemase (alr), found in Hamiltonella defensa subsp. Acyrthosiphon pisum (strain 5AT).